The sequence spans 448 residues: Chromosomal replication initiator protein DnaA (448 aa).

The domain I, interacts with DnaA modulators stretch occupies residues 1 to 72; that stretch reads MPDLQELWNY…VEGAYEFAEI (72 aa). Residues 72 to 110 are domain II; it reads IELTPIFVLPGESDNLTPLEPEEEHVLTKAETPTFLRET. The segment at 111 to 327 is domain III, AAA+ region; the sequence is HLNSKYTFDT…GALVRVQAYA (217 aa). ATP is bound by residues glycine 155, glycine 157, lysine 158, and threonine 159. The tract at residues 328–448 is domain IV, binds dsDNA; the sequence is TMQNAEITTS…ILDLKNTMKS (121 aa).

It belongs to the DnaA family. As to quaternary structure, oligomerizes as a right-handed, spiral filament on DNA at oriC.

The protein resides in the cytoplasm. Plays an essential role in the initiation and regulation of chromosomal replication. ATP-DnaA binds to the origin of replication (oriC) to initiate formation of the DNA replication initiation complex once per cell cycle. Binds the DnaA box (a 9 base pair repeat at the origin) and separates the double-stranded (ds)DNA. Forms a right-handed helical filament on oriC DNA; dsDNA binds to the exterior of the filament while single-stranded (ss)DNA is stabiized in the filament's interior. The ATP-DnaA-oriC complex binds and stabilizes one strand of the AT-rich DNA unwinding element (DUE), permitting loading of DNA polymerase. After initiation quickly degrades to an ADP-DnaA complex that is not apt for DNA replication. Binds acidic phospholipids. The polypeptide is Chromosomal replication initiator protein DnaA (Latilactobacillus sakei subsp. sakei (strain 23K) (Lactobacillus sakei subsp. sakei)).